Consider the following 119-residue polypeptide: NADH-quinone oxidoreductase subunit A (119 aa).

A run of 3 helical transmembrane segments spans residues tyrosine 7 to glycine 27, leucine 63 to valine 83, and isoleucine 88 to alanine 108.

This sequence belongs to the complex I subunit 3 family. As to quaternary structure, NDH-1 is composed of 14 different subunits. Subunits NuoA, H, J, K, L, M, N constitute the membrane sector of the complex.

The protein resides in the cell inner membrane. The catalysed reaction is a quinone + NADH + 5 H(+)(in) = a quinol + NAD(+) + 4 H(+)(out). NDH-1 shuttles electrons from NADH, via FMN and iron-sulfur (Fe-S) centers, to quinones in the respiratory chain. The immediate electron acceptor for the enzyme in this species is believed to be ubiquinone. Couples the redox reaction to proton translocation (for every two electrons transferred, four hydrogen ions are translocated across the cytoplasmic membrane), and thus conserves the redox energy in a proton gradient. The polypeptide is NADH-quinone oxidoreductase subunit A (Burkholderia ambifaria (strain MC40-6)).